The chain runs to 80 residues: DNA-binding protein S1FA2 (80 aa).

Residues Pro54 to Lys59 carry the Nuclear localization signal motif. The span at Pro55–Lys70 shows a compositional bias: basic residues. The segment at Pro55–Glu80 is disordered.

It belongs to the S1FA transcription factor family.

The protein resides in the nucleus. In terms of biological role, DNA-binding protein that specifically recognizes a negative element (S1F) within the RPS1 promoter. This chain is DNA-binding protein S1FA2 (S1FA2), found in Oryza sativa subsp. japonica (Rice).